Reading from the N-terminus, the 171-residue chain is 3-hydroxydecanoyl-[acyl-carrier-protein] dehydratase (171 aa).

His-70 is a catalytic residue.

It belongs to the thioester dehydratase family. FabA subfamily. As to quaternary structure, homodimer.

The protein resides in the cytoplasm. It carries out the reaction a (3R)-hydroxyacyl-[ACP] = a (2E)-enoyl-[ACP] + H2O. The catalysed reaction is (3R)-hydroxydecanoyl-[ACP] = (2E)-decenoyl-[ACP] + H2O. The enzyme catalyses (2E)-decenoyl-[ACP] = (3Z)-decenoyl-[ACP]. Its pathway is lipid metabolism; fatty acid biosynthesis. Necessary for the introduction of cis unsaturation into fatty acids. Catalyzes the dehydration of (3R)-3-hydroxydecanoyl-ACP to E-(2)-decenoyl-ACP and then its isomerization to Z-(3)-decenoyl-ACP. Can catalyze the dehydratase reaction for beta-hydroxyacyl-ACPs with saturated chain lengths up to 16:0, being most active on intermediate chain length. In Ectopseudomonas mendocina (strain ymp) (Pseudomonas mendocina), this protein is 3-hydroxydecanoyl-[acyl-carrier-protein] dehydratase.